An 875-amino-acid polypeptide reads, in one-letter code: Valine--tRNA ligase (875 aa).

The 'HIGH' region motif lies at 44 to 54; sequence PNVTGKLHLGH. The 'KMSKS' region signature appears at 520-524; the sequence is KMSKS. Position 523 (Lys-523) interacts with ATP. Positions 804–875 form a coiled coil; that stretch reads LEGLINIEEE…VRARLAQLKQ (72 aa).

The protein belongs to the class-I aminoacyl-tRNA synthetase family. ValS type 1 subfamily. In terms of assembly, monomer.

Its subcellular location is the cytoplasm. It catalyses the reaction tRNA(Val) + L-valine + ATP = L-valyl-tRNA(Val) + AMP + diphosphate. In terms of biological role, catalyzes the attachment of valine to tRNA(Val). As ValRS can inadvertently accommodate and process structurally similar amino acids such as threonine, to avoid such errors, it has a 'posttransfer' editing activity that hydrolyzes mischarged Thr-tRNA(Val) in a tRNA-dependent manner. This is Valine--tRNA ligase from Anoxybacillus flavithermus (strain DSM 21510 / WK1).